The chain runs to 212 residues: MSTGKFIVIEGMEGAGKSSAIAVIESTLNKHGIEYINTREPGGTPLAESLRDMVKSVDHQEKLTVETELLLMYASRSQLLANKILPALAAGKWVIGDRHDLSSRAYQGGGRGFDETIMNTISDITLKGFRPDITLYLDIDPHIGLSRAKARGDLDRIELEKMEFFIRVHNKYRELAEQDDSIITVDAAQAMLKVHQDVEKAVIGFITNTDKG.

11-18 (GMEGAGKS) contacts ATP.

This sequence belongs to the thymidylate kinase family.

It carries out the reaction dTMP + ATP = dTDP + ADP. Functionally, phosphorylation of dTMP to form dTDP in both de novo and salvage pathways of dTTP synthesis. This Colwellia psychrerythraea (strain 34H / ATCC BAA-681) (Vibrio psychroerythus) protein is Thymidylate kinase.